The primary structure comprises 170 residues: Peptide deformylase (170 aa).

Positions 91 and 133 each coordinate Fe cation. Residue Glu-134 is part of the active site. Position 137 (His-137) interacts with Fe cation.

The protein belongs to the polypeptide deformylase family. The cofactor is Fe(2+).

The catalysed reaction is N-terminal N-formyl-L-methionyl-[peptide] + H2O = N-terminal L-methionyl-[peptide] + formate. Removes the formyl group from the N-terminal Met of newly synthesized proteins. Requires at least a dipeptide for an efficient rate of reaction. N-terminal L-methionine is a prerequisite for activity but the enzyme has broad specificity at other positions. This is Peptide deformylase from Aliivibrio fischeri (strain ATCC 700601 / ES114) (Vibrio fischeri).